A 199-amino-acid polypeptide reads, in one-letter code: Photosystem I reaction center subunit XI (199 aa).

2 consecutive transmembrane segments (helical) span residues 108 to 128 (VTAGLLSAIGAVHIMTALLVL) and 165 to 185 (FWLGGCGGAVFAWLLVGTLHL).

Belongs to the PsaL family.

Its subcellular location is the cellular thylakoid membrane. The protein is Photosystem I reaction center subunit XI of Prochlorococcus marinus (strain MIT 9215).